Here is a 333-residue protein sequence, read N- to C-terminus: tRNA N6-adenosine threonylcarbamoyltransferase (333 aa).

Residues histidine 118 and histidine 122 each coordinate Fe cation. Residues 140–144 (VVSGG), aspartate 173, glycine 186, and asparagine 274 contribute to the substrate site. Aspartate 298 lines the Fe cation pocket.

Belongs to the KAE1 / TsaD family. Fe(2+) serves as cofactor.

The protein localises to the cytoplasm. The enzyme catalyses L-threonylcarbamoyladenylate + adenosine(37) in tRNA = N(6)-L-threonylcarbamoyladenosine(37) in tRNA + AMP + H(+). Functionally, required for the formation of a threonylcarbamoyl group on adenosine at position 37 (t(6)A37) in tRNAs that read codons beginning with adenine. Is involved in the transfer of the threonylcarbamoyl moiety of threonylcarbamoyl-AMP (TC-AMP) to the N6 group of A37, together with TsaE and TsaB. TsaD likely plays a direct catalytic role in this reaction. This is tRNA N6-adenosine threonylcarbamoyltransferase from Deinococcus geothermalis (strain DSM 11300 / CIP 105573 / AG-3a).